Consider the following 619-residue polypeptide: Polyadenylate-binding protein 1-like (619 aa).

4 RRM domains span residues 11-89 (ASLY…WSQR), 99-175 (GNIF…HFKS), 191-268 (TNIY…RAQK), and 294-370 (VNLY…LAQR). The interval 431 to 458 (PAPRWTSQPPRPSSAYPPGASMVRPPVV) is disordered. The PABC domain occupies 533 to 610 (QEPLTASMLA…AVAVLQAHQA (78 aa)).

Belongs to the polyadenylate-binding protein type-1 family. In terms of tissue distribution, expressed in ovary and testis. Also expressed in pancreas, liver and thymus, and at lower levels in other somatic tissues including brain and lung.

The protein localises to the cytoplasm. Its function is as follows. Poly(A)-binding protein involved in oocyte maturation and early embryo development. It is required for cytosolic mRNA polyadenylation and translational activation of maternally stored mRNA in oocytes. The protein is Polyadenylate-binding protein 1-like of Homo sapiens (Human).